The following is a 207-amino-acid chain: ADP-ribose pyrophosphatase (207 aa).

Residues 37–38 and arginine 64 contribute to the substrate site; that span reads RE. The Nudix hydrolase domain maps to 41–172; that stretch reads EHFGAVAIVA…EIVNSIAIAG (132 aa). Alanine 76 contributes to the Mg(2+) binding site. The Nudix box motif lies at 77 to 99; sequence GLLDVAGEPPHLTAARELREEVG. Leucine 78 lines the substrate pocket. Residues glutamate 93 and glutamate 97 each coordinate Mg(2+). Residues 114 to 116 and glutamate 120 each bind substrate; that span reads APG. Glutamate 142 contributes to the Mg(2+) binding site. The Proton acceptor role is filled by glutamate 142.

This sequence belongs to the Nudix hydrolase family. Homodimer. Mg(2+) is required as a cofactor. Requires Mn(2+) as cofactor.

It catalyses the reaction ADP-D-ribose + H2O = D-ribose 5-phosphate + AMP + 2 H(+). It carries out the reaction 8-oxo-dGDP + H2O = 8-oxo-dGMP + phosphate + H(+). The enzyme catalyses 8-oxo-GDP + H2O = 8-oxo-GMP + phosphate + H(+). Functionally, catalyzes the hydrolysis of ADP-ribose (ADPR) to AMP and ribose-5-phosphate. Can also hydrolyze ADP-mannose and ADP-glucose, with lower efficiency. Has weaker activity with NAD, GDP-sugars and UDP-sugars. Also catalyzes the conversion of 8-oxo-dGDP to 8-oxo-dGMP, and 8-oxo-GDP to 8-oxo-GMP. Functions in concert with MutT1 to detoxify 8-oxo-dGTP to 8-oxo-dGMP and may play an important role in supporting cellular growth under oxidative stress. The catalytic efficiency is much higher for the hydrolysis of ADPR than 8-oxo-dGTP, suggesting a more relevant biological role in hydrolysis of ADPR. The polypeptide is ADP-ribose pyrophosphatase (Mycobacterium tuberculosis (strain ATCC 25618 / H37Rv)).